A 205-amino-acid chain; its full sequence is MKKIIICFIFVFSINISFADATSDLIDKIKNIHSMTANFNQKLIDGQTNNNLNSKGNMSLKKPQYFKWITTSPNNQEIVSNGTKLWIYDGDLDQLIIKKVSNDIAQFPYLILLSKNTNNINKLFTVTAQDNNSYILKPKNDQMIDSIKIKFTPNNQLEYLEISTSLNQFTKIEFNNVKTDVDISNTSFDFTAPQDTDIIDETKSA.

An N-terminal signal peptide occupies residues 1–19; sequence MKKIIICFIFVFSINISFA.

Belongs to the LolA family. Monomer.

The protein resides in the periplasm. Participates in the translocation of lipoproteins from the inner membrane to the outer membrane. Only forms a complex with a lipoprotein if the residue after the N-terminal Cys is not an aspartate (The Asp acts as a targeting signal to indicate that the lipoprotein should stay in the inner membrane). The protein is Outer-membrane lipoprotein carrier protein of Francisella tularensis subsp. novicida (strain U112).